A 291-amino-acid chain; its full sequence is m-AAA protease-interacting protein 1, mitochondrial (291 aa).

A mitochondrion-targeting transit peptide spans 1-96 (MALAARLLPQ…SFPACPQRSY (96 aa)).

As to quaternary structure, interacts with AFG3L2. Interacts with SPG7. Interacts with SMDT1/EMRE (via the N-terminal transit peptide); interaction is direct and takes place before maturation of SMDT1/EMRE.

It is found in the mitochondrion matrix. Functionally, promotes sorting of SMDT1/EMRE in mitochondria by ensuring its maturation. Interacts with the transit peptide region of SMDT1/EMRE precursor protein in the mitochondrial matrix, leading to protect it against protein degradation by YME1L1, thereby ensuring SMDT1/EMRE maturation by the mitochondrial processing peptidase (PMPCA and PMPCB). The chain is m-AAA protease-interacting protein 1, mitochondrial from Homo sapiens (Human).